Reading from the N-terminus, the 1097-residue chain is Error-prone DNA polymerase (1097 aa).

Positions 1039 to 1097 (PTGRGDEFAHGSPGGGDSRDRSPPKPRDIVVPLCRARHKGIDPEPETMPSAFPKPRDFR) are disordered. Positions 1055-1066 (DSRDRSPPKPRD) are enriched in basic and acidic residues.

Belongs to the DNA polymerase type-C family. DnaE2 subfamily.

The protein resides in the cytoplasm. The enzyme catalyses DNA(n) + a 2'-deoxyribonucleoside 5'-triphosphate = DNA(n+1) + diphosphate. Its function is as follows. DNA polymerase involved in damage-induced mutagenesis and translesion synthesis (TLS). It is not the major replicative DNA polymerase. This Allorhizobium ampelinum (strain ATCC BAA-846 / DSM 112012 / S4) (Agrobacterium vitis (strain S4)) protein is Error-prone DNA polymerase.